The sequence spans 822 residues: SKI/DACH domain-containing protein 1 (822 aa).

The segment covering H245–A261 has biased composition (basic residues). Residues H245–V370 are disordered. Positions P278–S318 are enriched in low complexity. A compositionally biased stretch (acidic residues) spans S319–G338. K602 participates in a covalent cross-link: Glycyl lysine isopeptide (Lys-Gly) (interchain with G-Cter in SUMO2). 2 disordered regions span residues E658 to S677 and L706 to G732. The segment covering P660–L675 has biased composition (polar residues).

This sequence belongs to the DACH/dachshund family.

The chain is SKI/DACH domain-containing protein 1 (Skida1) from Mus musculus (Mouse).